A 739-amino-acid chain; its full sequence is Glycine--tRNA ligase (739 aa).

Residues 1 to 36 (MPSPRPVLLRGARAALLLLLPPRLLARPSLLLRRSL) constitute a mitochondrion transit peptide. Residue Ser35 is modified to Phosphoserine. A WHEP-TRS domain is found at 63–119 (VLAPLRLAVRQQGDLVRKLKEDKAPQVDVDKAVAELKARKRVLEAKELALQPKDDIV). Lys204 is modified (N6-acetyllysine). A glycine-binding site is contributed by Glu299. Residues 331–333 (RNE) and 342–343 (RV) contribute to the ATP site. Residue Glu350 coordinates glycine. A Phosphotyrosine modification is found at Tyr453. 457–458 (EI) serves as a coordination point for ATP. The residue at position 501 (Lys501) is an N6-acetyllysine. Residue 576–578 (EPS) coordinates glycine. Arg583 contacts ATP. Ser700 is subject to Phosphoserine. At Thr736 the chain carries Phosphothreonine.

Belongs to the class-II aminoacyl-tRNA synthetase family. Homodimer. Widely expressed, including in brain and spinal cord. As to expression, expressed in brain, spinal cord, muscle, heart and spleen. In terms of tissue distribution, expressed in brain, spinal cord, muscle, heart, spleen and liver.

The protein resides in the cytoplasm. It is found in the cell projection. Its subcellular location is the axon. It localises to the secreted. The protein localises to the extracellular exosome. The protein resides in the mitochondrion. It carries out the reaction tRNA(Gly) + glycine + ATP = glycyl-tRNA(Gly) + AMP + diphosphate. The catalysed reaction is 2 ATP + H(+) = P(1),P(4)-bis(5'-adenosyl) tetraphosphate + diphosphate. Its activity is regulated as follows. Ap4A synthesis is inhibited by tRNA, via the disruption of the second ATP-binding site by direct blocking and/or by tRNA-induced conformational change. Catalyzes the ATP-dependent ligation of glycine to the 3'-end of its cognate tRNA, via the formation of an aminoacyl-adenylate intermediate (Gly-AMP). Also produces diadenosine tetraphosphate (Ap4A), a universal pleiotropic signaling molecule needed for cell regulation pathways, by direct condensation of 2 ATPs. Thereby, may play a special role in Ap4A homeostasis. The chain is Glycine--tRNA ligase from Homo sapiens (Human).